A 358-amino-acid chain; its full sequence is Phospho-N-acetylmuramoyl-pentapeptide-transferase (358 aa).

Transmembrane regions (helical) follow at residues 27–47 (LFNN…SLFA), 81–101 (MGGV…TINL), 106–126 (LFLL…DDYL), 147–167 (VISI…PLVI), 171–191 (SWVI…LVGI), 201–221 (LDGL…TEIL), 228–248 (LFVF…FLKY), 255–275 (IFMG…IALL), 278–298 (SVFT…SVII), and 336–356 (IVEN…VLKI).

Belongs to the glycosyltransferase 4 family. MraY subfamily. The cofactor is Mg(2+).

It is found in the cell inner membrane. The catalysed reaction is UDP-N-acetyl-alpha-D-muramoyl-L-alanyl-gamma-D-glutamyl-meso-2,6-diaminopimeloyl-D-alanyl-D-alanine + di-trans,octa-cis-undecaprenyl phosphate = di-trans,octa-cis-undecaprenyl diphospho-N-acetyl-alpha-D-muramoyl-L-alanyl-D-glutamyl-meso-2,6-diaminopimeloyl-D-alanyl-D-alanine + UMP. Its pathway is cell wall biogenesis; peptidoglycan biosynthesis. Its function is as follows. Catalyzes the initial step of the lipid cycle reactions in the biosynthesis of the cell wall peptidoglycan: transfers peptidoglycan precursor phospho-MurNAc-pentapeptide from UDP-MurNAc-pentapeptide onto the lipid carrier undecaprenyl phosphate, yielding undecaprenyl-pyrophosphoryl-MurNAc-pentapeptide, known as lipid I. The protein is Phospho-N-acetylmuramoyl-pentapeptide-transferase of Prochlorococcus marinus (strain MIT 9215).